Reading from the N-terminus, the 104-residue chain is uncharacterized protein (104 aa).

A run of 2 helical transmembrane segments spans residues 47-67 and 72-92; these read IDHR…LAML and VGHV…FVLA.

To M.leprae ML1584.

Its subcellular location is the cell membrane. This is an uncharacterized protein from Mycobacterium tuberculosis (strain CDC 1551 / Oshkosh).